The sequence spans 397 residues: Ribosomal RNA large subunit methyltransferase I (397 aa).

Positions 2-81 constitute a PUA domain; the sequence is SAQVILQPSR…ESIDNGFFLR (80 aa).

The protein belongs to the methyltransferase superfamily. RlmI family.

It is found in the cytoplasm. The enzyme catalyses cytidine(1962) in 23S rRNA + S-adenosyl-L-methionine = 5-methylcytidine(1962) in 23S rRNA + S-adenosyl-L-homocysteine + H(+). Its function is as follows. Specifically methylates the cytosine at position 1962 (m5C1962) of 23S rRNA. In Alteromonas mediterranea (strain DSM 17117 / CIP 110805 / LMG 28347 / Deep ecotype), this protein is Ribosomal RNA large subunit methyltransferase I.